A 158-amino-acid polypeptide reads, in one-letter code: 2-C-methyl-D-erythritol 2,4-cyclodiphosphate synthase (158 aa).

A divalent metal cation is bound by residues Asp-9 and His-11. Residues 9-11 (DVH) and 35-36 (HS) contribute to the 4-CDP-2-C-methyl-D-erythritol 2-phosphate site. His-43 contacts a divalent metal cation. Residues 57–59 (DIG), 62–66 (FPDTD), 133–136 (TTTE), Phe-140, and Arg-143 each bind 4-CDP-2-C-methyl-D-erythritol 2-phosphate.

The protein belongs to the IspF family. Homotrimer. Requires a divalent metal cation as cofactor.

It carries out the reaction 4-CDP-2-C-methyl-D-erythritol 2-phosphate = 2-C-methyl-D-erythritol 2,4-cyclic diphosphate + CMP. Its pathway is isoprenoid biosynthesis; isopentenyl diphosphate biosynthesis via DXP pathway; isopentenyl diphosphate from 1-deoxy-D-xylulose 5-phosphate: step 4/6. Its function is as follows. Involved in the biosynthesis of isopentenyl diphosphate (IPP) and dimethylallyl diphosphate (DMAPP), two major building blocks of isoprenoid compounds. Catalyzes the conversion of 4-diphosphocytidyl-2-C-methyl-D-erythritol 2-phosphate (CDP-ME2P) to 2-C-methyl-D-erythritol 2,4-cyclodiphosphate (ME-CPP) with a corresponding release of cytidine 5-monophosphate (CMP). In Actinobacillus succinogenes (strain ATCC 55618 / DSM 22257 / CCUG 43843 / 130Z), this protein is 2-C-methyl-D-erythritol 2,4-cyclodiphosphate synthase.